Here is a 496-residue protein sequence, read N- to C-terminus: Geranylhydroquinone 3''-hydroxylase CYP76B74 (496 aa).

The helical transmembrane segment at 3-23 threads the bilayer; the sequence is YTTILVGFLIGFVLFKALTRK. Residue cysteine 436 coordinates heme.

The protein belongs to the cytochrome P450 family. The cofactor is heme.

The protein localises to the endoplasmic reticulum membrane. The catalysed reaction is (2E)-geranylhydroquinone + reduced [NADPH--hemoprotein reductase] + O2 = (2Z)-3''-hydroxygeranylhydroquinone + oxidized [NADPH--hemoprotein reductase] + H2O + H(+). In terms of biological role, hydroxylase involved in the biosynthesis pathway of the red naphthoquinone pigment shikonin. Catalyzes the key step C-3''-hydroxylation of the prenylated phenolic intermediate geranylhydroquinone to form 3''-hydroxygeranylhydroquinone. This is Geranylhydroquinone 3''-hydroxylase CYP76B74 from Arnebia euchroma (Pink arnebia).